Reading from the N-terminus, the 110-residue chain is Large ribosomal subunit protein uL24 (110 aa).

It belongs to the universal ribosomal protein uL24 family. As to quaternary structure, part of the 50S ribosomal subunit.

Its function is as follows. One of two assembly initiator proteins, it binds directly to the 5'-end of the 23S rRNA, where it nucleates assembly of the 50S subunit. Functionally, one of the proteins that surrounds the polypeptide exit tunnel on the outside of the subunit. This chain is Large ribosomal subunit protein uL24, found in Chloroflexus aggregans (strain MD-66 / DSM 9485).